A 288-amino-acid polypeptide reads, in one-letter code: MSSIKEVREKIESIRNIQKLSKAMEMIAASKMKKAQRLMLVSQPYTKAIRKVIDHISLGKLEYRHVYLMNREVRSVGYWVISSDRGLAGGLNVNVFRMLLNDISRWNKLNVTIKLAIIGSKAISFFNCIDPNMIVSYVSGIGDVPKMSQLIGLVGTMLQLYCNGQVDRLYLIYNKFINTLSQVPKIIQILPIFSESNNTCVTKHWDYLYEPDSKVLLDTLLNRYIESQVYQGVVENLASEQSARMIAMKTASDNGETIIKDLRVFYNKLRQSKITQELAEIISGSSVI.

Belongs to the ATPase gamma chain family. In terms of assembly, F-type ATPases have 2 components, CF(1) - the catalytic core - and CF(0) - the membrane proton channel. CF(1) has five subunits: alpha(3), beta(3), gamma(1), delta(1), epsilon(1). CF(0) has three main subunits: a, b and c.

Its subcellular location is the cell inner membrane. In terms of biological role, produces ATP from ADP in the presence of a proton gradient across the membrane. The gamma chain is believed to be important in regulating ATPase activity and the flow of protons through the CF(0) complex. In Blochmanniella floridana, this protein is ATP synthase gamma chain.